Here is a 176-residue protein sequence, read N- to C-terminus: Insulin-like growth factor 1 (176 aa).

Residues 45-73 are b; sequence GPETLCGAELVDTLQFVCGERGFYFSKPT. Cystine bridges form between C50–C92, C62–C105, and C91–C96. The tract at residues 74–85 is c; the sequence is GYGPSSRRSHNR. Residues 86-106 form an a region; the sequence is GIVDECCFQSCELRRLEMYCA. The tract at residues 107 to 114 is d; sequence PVKSGKAA. The propeptide at 115-176 is e peptide; that stretch reads RSVRAQRHTD…GNTGGRNYRM (62 aa). Residues 115–176 are disordered; sequence RSVRAQRHTD…GNTGGRNYRM (62 aa). Over residues 140–161 the composition is skewed to basic and acidic residues; it reads RGTERRTAQHPDKTKPKKEVHQ.

This sequence belongs to the insulin family.

The protein localises to the secreted. Functionally, the insulin-like growth factors, isolated from plasma, are structurally and functionally related to insulin but have a much higher growth-promoting activity. Acts as a ligand for IGF1R. Binds to the alpha subunit of IGF1R, leading to the activation of the intrinsic tyrosine kinase activity which autophosphorylates tyrosine residues in the beta subunit thus initiatiating a cascade of down-stream signaling events leading to activation of the PI3K-AKT/PKB and the Ras-MAPK pathways. Binds to integrins. Its binding to integrins and subsequent ternary complex formation with integrins and IGFR1 are essential for IGF1 signaling. In Oncorhynchus mykiss (Rainbow trout), this protein is Insulin-like growth factor 1.